The following is a 563-amino-acid chain: Tripeptidyl-peptidase 1 (563 aa).

Residues 1 to 19 (MGPRSGLLGLFALFVAGKC) form the signal peptide. A propeptide spans 20–195 (SYSPEPDQQR…PEPQVPGTVG (176 aa)) (removed in mature form). Residues cysteine 111 and cysteine 122 are joined by a disulfide bond. The Peptidase S53 domain maps to 199–563 (GVTPSVIRKR…PALLKTLMNP (365 aa)). N-linked (GlcNAc...) asparagine glycosylation is found at asparagine 210 and asparagine 222. Catalysis depends on charge relay system residues glutamate 272 and aspartate 276. N-linked (GlcNAc...) asparagine glycosylation is found at asparagine 286, asparagine 313, and asparagine 443. 2 cysteine pairs are disulfide-bonded: cysteine 365-cysteine 526 and cysteine 522-cysteine 537. The Charge relay system role is filled by serine 475. The Ca(2+) site is built by aspartate 517 and valine 518. Ca(2+) contacts are provided by glycine 539, glycine 541, and aspartate 543.

As to quaternary structure, monomer. Interacts with CLN5. Interacts with CLN3. The cofactor is Ca(2+). Activated by autocatalytic proteolytical processing upon acidification. N-glycosylation is required for processing and activity.

The protein localises to the lysosome. It localises to the melanosome. It carries out the reaction Release of an N-terminal tripeptide from a polypeptide, but also has endopeptidase activity.. In terms of biological role, lysosomal serine protease with tripeptidyl-peptidase I activity. May act as a non-specific lysosomal peptidase which generates tripeptides from the breakdown products produced by lysosomal proteinases. Requires substrates with an unsubstituted N-terminus. This Bos taurus (Bovine) protein is Tripeptidyl-peptidase 1 (TPP1).